The primary structure comprises 289 residues: uncharacterized protein (289 aa).

Positions 268-289 (SDDGYETQWSDGPYSIPSGLSD) are disordered.

This is an uncharacterized protein from Zea mays (Maize).